The sequence spans 589 residues: Nicotinate phosphoribosyltransferase (589 aa).

Positions 1 to 30 (MSQSNTPLKRKKTENGYSENGSTTGATSNQ) are disordered. The segment covering 15 to 30 (NGYSENGSTTGATSNQ) has biased composition (polar residues). Nicotinate contacts are provided by Tyr68 and Thr256. His259 bears the Phosphohistidine mark. Arg356 contributes to the nicotinate binding site. Residue Thr418 coordinates 5-phospho-alpha-D-ribose 1-diphosphate.

The protein belongs to the NAPRTase family. Mg(2+) is required as a cofactor. Mn(2+) serves as cofactor. Transiently phosphorylated on a His residue during the reaction cycle. Phosphorylation strongly increases the affinity for substrates and increases the rate of nicotinate D-ribonucleotide production. Dephosphorylation regenerates the low-affinity form of the enzyme, leading to product release.

The catalysed reaction is nicotinate + 5-phospho-alpha-D-ribose 1-diphosphate + ATP + H2O = nicotinate beta-D-ribonucleotide + ADP + phosphate + diphosphate. The protein operates within cofactor biosynthesis; NAD(+) biosynthesis; nicotinate D-ribonucleotide from nicotinate: step 1/1. Its function is as follows. Catalyzes the first step in the biosynthesis of NAD from nicotinic acid, the ATP-dependent synthesis of beta-nicotinate D-ribonucleotide from nicotinate and 5-phospho-D-ribose 1-phosphate. Helps prevent cellular oxidative stress via its role in NAD biosynthesis. The sequence is that of Nicotinate phosphoribosyltransferase (naprt) from Dictyostelium discoideum (Social amoeba).